The chain runs to 266 residues: GATA-type zinc finger protein 1 (266 aa).

Disordered stretches follow at residues 1 to 31 (MEAAQAGDLTRRQELLAPPCLDTESLRKSRP), 106 to 129 (TQCPNLEISSATSPASLQRRPRKQ), and 171 to 191 (CSQKLPASPSKALASPGSSEA). Polar residues predominate over residues 106–121 (TQCPNLEISSATSPAS). A GATA-type zinc finger spans residues 197–221 (CASCRTQRTPLWRDAEDGTPLCNAC).

As to expression, specifically expressed in adult testis and ovary. Expressed at high levels in the somatic cells of the developing gonads, including Leydig cells in the testes and granulosa cells in the ovaries.

The protein localises to the nucleus. Functionally, transcriptional regulator that plays a key role in germ cell development. Determines the oogenic fate by activating key genes for the oogenic program and meiotic prophase entry. Acts downstream of bone morphogenetic protein (BMP) by regulating expression of genes required for the oogenic programs, which are repressed by Polycomb activities in sexually uncommitted germ cells. Regulates expression of STRA8, a central downstream effector for the meiotic program. Acts independently of retinoic acid (RA). In males, not required for germ-cell sex determination, but required to allow the spermatogonia to efficiently accomplish the meiotic prophase. The polypeptide is GATA-type zinc finger protein 1 (Mus musculus (Mouse)).